A 370-amino-acid chain; its full sequence is Ubiquitin carboxyl-terminal hydrolase 12-B (370 aa).

The USP domain maps to 39 to 369 (FGLVNFGNTC…SGYILFYQSR (331 aa)). The Nucleophile role is filled by C48. The interval 145-168 (KQEKQNGRIPNGNIDNENNNNTPD) is disordered. Positions 155-165 (NGNIDNENNNN) are enriched in low complexity. C186, C189, C233, and C236 together coordinate Zn(2+). H317 acts as the Proton acceptor in catalysis.

The protein belongs to the peptidase C19 family. USP12/USP46 subfamily. In terms of assembly, interacts with WDR48.

It catalyses the reaction Thiol-dependent hydrolysis of ester, thioester, amide, peptide and isopeptide bonds formed by the C-terminal Gly of ubiquitin (a 76-residue protein attached to proteins as an intracellular targeting signal).. Functionally, deubiquitinating enzyme. Has almost no deubiquitinating activity by itself and requires the interaction with wdr48 to have a high activity. This Xenopus laevis (African clawed frog) protein is Ubiquitin carboxyl-terminal hydrolase 12-B (usp12-b).